Consider the following 366-residue polypeptide: Geranylgeranyl pyrophosphate synthase, chloroplastic/chromoplastic (366 aa).

A disordered region spans residues 44–65; that stretch reads KRTVSSSSSSSLITKEDNNLKS. Positions 112, 115, and 144 each coordinate isopentenyl diphosphate. Mg(2+)-binding residues include Asp151 and Asp157. Arg162 lines the dimethylallyl diphosphate pocket. Residue Arg163 participates in isopentenyl diphosphate binding. Residues Lys251, Thr252, Gln289, Lys306, and Lys316 each contribute to the dimethylallyl diphosphate site.

It belongs to the FPP/GGPP synthase family. Dimer. The cofactor is Mg(2+).

The protein resides in the plastid. The protein localises to the chloroplast stroma. Its subcellular location is the chromoplast. It carries out the reaction isopentenyl diphosphate + dimethylallyl diphosphate = (2E)-geranyl diphosphate + diphosphate. The catalysed reaction is isopentenyl diphosphate + (2E)-geranyl diphosphate = (2E,6E)-farnesyl diphosphate + diphosphate. It catalyses the reaction isopentenyl diphosphate + (2E,6E)-farnesyl diphosphate = (2E,6E,10E)-geranylgeranyl diphosphate + diphosphate. It participates in isoprenoid biosynthesis; farnesyl diphosphate biosynthesis; farnesyl diphosphate from geranyl diphosphate and isopentenyl diphosphate: step 1/1. The protein operates within isoprenoid biosynthesis; geranyl diphosphate biosynthesis; geranyl diphosphate from dimethylallyl diphosphate and isopentenyl diphosphate: step 1/1. Its pathway is isoprenoid biosynthesis; geranylgeranyl diphosphate biosynthesis; geranylgeranyl diphosphate from farnesyl diphosphate and isopentenyl diphosphate: step 1/1. In terms of biological role, catalyzes the trans-addition of the three molecules of IPP onto DMAPP to form geranylgeranyl pyrophosphate. The chain is Geranylgeranyl pyrophosphate synthase, chloroplastic/chromoplastic (GGPS1) from Sinapis alba (White mustard).